The following is a 143-amino-acid chain: Large ribosomal subunit protein uL11 (143 aa).

This sequence belongs to the universal ribosomal protein uL11 family. As to quaternary structure, part of the ribosomal stalk of the 50S ribosomal subunit. Interacts with L10 and the large rRNA to form the base of the stalk. L10 forms an elongated spine to which L12 dimers bind in a sequential fashion forming a multimeric L10(L12)X complex. One or more lysine residues are methylated.

In terms of biological role, forms part of the ribosomal stalk which helps the ribosome interact with GTP-bound translation factors. The chain is Large ribosomal subunit protein uL11 from Borreliella afzelii (strain PKo) (Borrelia afzelii).